The following is a 150-amino-acid chain: Catabolic 3-dehydroquinase 1 (150 aa).

Catalysis depends on Y24, which acts as the Proton acceptor. Positions 75, 81, and 88 each coordinate substrate. H101 (proton donor) is an active-site residue. Substrate is bound by residues 102–103 and R112; that span reads VS.

This sequence belongs to the type-II 3-dehydroquinase family. In terms of assembly, homododecamer. Adopts a ring-like structure, composed of an arrangement of two hexameric rings stacked on top of one another.

The catalysed reaction is 3-dehydroquinate = 3-dehydroshikimate + H2O. It functions in the pathway aromatic compound metabolism; 3,4-dihydroxybenzoate biosynthesis; 3,4-dihydroxybenzoate from 3-dehydroquinate: step 1/2. Is involved in the catabolism of quinate. Allows the utilization of quinate as carbon source via the beta-ketoadipate pathway. The protein is Catabolic 3-dehydroquinase 1 of Aspergillus fumigatus (strain ATCC MYA-4609 / CBS 101355 / FGSC A1100 / Af293) (Neosartorya fumigata).